The following is a 338-amino-acid chain: Lipoate-protein ligase A (338 aa).

A BPL/LPL catalytic domain is found at 29 to 216 (PATQRVLFLW…AFFAHYGERV (188 aa)). ATP contacts are provided by residues Arg71, 76–79 (GAVF), and Lys134. Residue Lys134 coordinates (R)-lipoate.

It belongs to the LplA family. Monomer.

It localises to the cytoplasm. It carries out the reaction L-lysyl-[lipoyl-carrier protein] + (R)-lipoate + ATP = N(6)-[(R)-lipoyl]-L-lysyl-[lipoyl-carrier protein] + AMP + diphosphate + H(+). Its pathway is protein modification; protein lipoylation via exogenous pathway; protein N(6)-(lipoyl)lysine from lipoate: step 1/2. It participates in protein modification; protein lipoylation via exogenous pathway; protein N(6)-(lipoyl)lysine from lipoate: step 2/2. In terms of biological role, catalyzes both the ATP-dependent activation of exogenously supplied lipoate to lipoyl-AMP and the transfer of the activated lipoyl onto the lipoyl domains of lipoate-dependent enzymes. The polypeptide is Lipoate-protein ligase A (Escherichia coli (strain 55989 / EAEC)).